The primary structure comprises 313 residues: Trimeric intracellular cation channel type 1B.2 (313 aa).

The Lumenal portion of the chain corresponds to 1–28 (MGWVPDEWSIDHDTLIDAGGYVQKLKLY). The helical transmembrane segment at 29 to 48 (PYFDAAHYVLTCLSVRHDLG) threads the bilayer. The Cytoplasmic segment spans residues 49–57 (PDAISFSRK). A discontinuously helical membrane pass occupies residues 58 to 82 (HPFSCWLSCMLMSFAGSFLSCFLLG). The Lumenal portion of the chain corresponds to 83 to 90 (EPIISPLK). A helical transmembrane segment spans residues 91 to 108 (QHADILLGSIVWYLVFYS). The Cytoplasmic segment spans residues 109 to 118 (PFDVVFRLAT). A helical transmembrane segment spans residues 119 to 149 (WFPVKLGLSVLKEVQRTHKIAAGVKHAVRIY). K130 and R134 together coordinate a 1,2-diacyl-sn-glycero-3-phospho-(1D-myo-inositol-4,5-bisphosphate). At 150–151 (PE) the chain is on the lumenal side. A discontinuously helical transmembrane segment spans residues 152–178 (SYLVQILVGVAKGAGSGVVKIVEQLAR). G168 lines the a 1,2-diacyl-sn-glycero-3-phospho-(1D-myo-inositol-4,5-bisphosphate) pocket. The Cytoplasmic segment spans residues 179–192 (GTWHPTNHEILRPS). The helical transmembrane segment at 193 to 210 (FTTKACVIASIVFTLERH) threads the bilayer. Residues 211–216 (SMYVTA) are Lumenal-facing. The helical transmembrane segment at 217-239 (PHDLVYLCVVGFFIYFKLASLCL) threads the bilayer. Residues 240 to 313 (SVHDVLMPIE…MSNGTDKKNN (74 aa)) are Cytoplasmic-facing.

It belongs to the TMEM38 family. In terms of assembly, homotrimer; trimerization probably requires binding to phosphatidylinositol 4,5-bisphosphate (PIP2).

It is found in the endoplasmic reticulum membrane. Its function is as follows. Potassium channel that mediates transmembrane potassium transport. Might be required for maintenance of rapid intracellular calcium release. May act as a potassium counter-ion channel that functions in synchronization with calcium release from intracellular stores. Binds phosphatidylinositol 4,5-bisphosphate (PIP2). The chain is Trimeric intracellular cation channel type 1B.2 from Caenorhabditis elegans.